Consider the following 258-residue polypeptide: Aspartate/glutamate leucyltransferase (258 aa).

This sequence belongs to the R-transferase family. Bpt subfamily.

The protein localises to the cytoplasm. The enzyme catalyses N-terminal L-glutamyl-[protein] + L-leucyl-tRNA(Leu) = N-terminal L-leucyl-L-glutamyl-[protein] + tRNA(Leu) + H(+). The catalysed reaction is N-terminal L-aspartyl-[protein] + L-leucyl-tRNA(Leu) = N-terminal L-leucyl-L-aspartyl-[protein] + tRNA(Leu) + H(+). In terms of biological role, functions in the N-end rule pathway of protein degradation where it conjugates Leu from its aminoacyl-tRNA to the N-termini of proteins containing an N-terminal aspartate or glutamate. This is Aspartate/glutamate leucyltransferase from Rhodopseudomonas palustris (strain BisB18).